The sequence spans 310 residues: Nucleotide-binding protein BAD_0837 (310 aa).

ATP is bound at residue 31 to 38 (GMSGAGRS). 82–85 (DVRS) provides a ligand contact to GTP.

Belongs to the RapZ-like family.

Its function is as follows. Displays ATPase and GTPase activities. The protein is Nucleotide-binding protein BAD_0837 of Bifidobacterium adolescentis (strain ATCC 15703 / DSM 20083 / NCTC 11814 / E194a).